The following is a 181-amino-acid chain: Ribosome maturation factor RimM (181 aa).

Residues 98–172 (EDEFYFEDLI…RIVIPELSLW (75 aa)) enclose the PRC barrel domain.

It belongs to the RimM family. Binds ribosomal protein uS19.

The protein localises to the cytoplasm. An accessory protein needed during the final step in the assembly of 30S ribosomal subunit, possibly for assembly of the head region. Essential for efficient processing of 16S rRNA. May be needed both before and after RbfA during the maturation of 16S rRNA. It has affinity for free ribosomal 30S subunits but not for 70S ribosomes. The polypeptide is Ribosome maturation factor RimM (Hyphomonas neptunium (strain ATCC 15444)).